We begin with the raw amino-acid sequence, 295 residues long: GATA transcription factor 18 (295 aa).

Residues serine 148–alanine 202 form a GATA-type zinc finger.

Belongs to the type IV zinc-finger family. Class B subfamily. As to quaternary structure, homodimer. Forms heterodimers with GATA19, GATA22 and GATA21. Interacts with JAG. Binds to AGO10/PNH. In terms of tissue distribution, expressed in vegetative and inflorescence shoot apical meristems (SAMs), axillary (SAMs), floral meristems, developing ovules and stamens, vascular tissues, and in the embryo.

The protein resides in the nucleus. Functionally, transcriptional factor that specifically binds 5'-GATA-3' or 5'-GAT-3' motifs within gene promoters (including its own promoter and GATA21 promoter), thus regulating the expression of genes mostly involved in hormone responses and floral organ specification (including genes regulating hormones responses). Regulates both flower and shoot apical meristem (SAM) development, especially for establishing organ boundaries in shoots and flowers, probably by controlling the number and position of WUS-expressing cells. Coregulates, with AGO10/PNH, the shoot apical meristem (SAM) organization. Regulates floral organ development via the promotion of JAG and NPR5/BOP2 expression. Modulates cytokinin homeostasis in organ boundaries by regulating CKX3 expression. Involved in cell proliferation and differentiation. Required to position the inductive proembryo boundary via the regulation of gene expression and for early embryonic development. Together with GIF1/AN3, mediates cotyledon identity by preventing ectopic root formation through the repression of PLT1 expression. The polypeptide is GATA transcription factor 18 (Arabidopsis thaliana (Mouse-ear cress)).